Reading from the N-terminus, the 71-residue chain is MGSFSMGHWLIVLAIIVLLFGAKKIPELAKGVGKGIKTFKKEMEDETPVEKIEKADSETQSTKQNETTKNV.

Residues 1 to 21 (MGSFSMGHWLIVLAIIVLLFG) traverse the membrane as a helical segment. Over residues 41–57 (KEMEDETPVEKIEKADS) the composition is skewed to basic and acidic residues. The tract at residues 41 to 71 (KEMEDETPVEKIEKADSETQSTKQNETTKNV) is disordered. Polar residues predominate over residues 58 to 71 (ETQSTKQNETTKNV).

It belongs to the TatA/E family. As to quaternary structure, the Tat system comprises two distinct complexes: a TatABC complex, containing multiple copies of TatA, TatB and TatC subunits, and a separate TatA complex, containing only TatA subunits. Substrates initially bind to the TatABC complex, which probably triggers association of the separate TatA complex to form the active translocon.

The protein resides in the cell inner membrane. Functionally, part of the twin-arginine translocation (Tat) system that transports large folded proteins containing a characteristic twin-arginine motif in their signal peptide across membranes. TatA could form the protein-conducting channel of the Tat system. This chain is Sec-independent protein translocase protein TatA, found in Campylobacter fetus subsp. fetus (strain 82-40).